A 179-amino-acid polypeptide reads, in one-letter code: Large ribosomal subunit protein uL5 (179 aa).

The protein belongs to the universal ribosomal protein uL5 family. Part of the 50S ribosomal subunit; part of the 5S rRNA/L5/L18/L25 subcomplex. Contacts the 5S rRNA and the P site tRNA. Forms a bridge to the 30S subunit in the 70S ribosome.

Functionally, this is one of the proteins that bind and probably mediate the attachment of the 5S RNA into the large ribosomal subunit, where it forms part of the central protuberance. In the 70S ribosome it contacts protein S13 of the 30S subunit (bridge B1b), connecting the 2 subunits; this bridge is implicated in subunit movement. Contacts the P site tRNA; the 5S rRNA and some of its associated proteins might help stabilize positioning of ribosome-bound tRNAs. This Bdellovibrio bacteriovorus (strain ATCC 15356 / DSM 50701 / NCIMB 9529 / HD100) protein is Large ribosomal subunit protein uL5.